Reading from the N-terminus, the 81-residue chain is High-potential iron-sulfur protein (81 aa).

[4Fe-4S] cluster is bound by residues cysteine 43, cysteine 46, cysteine 59, and cysteine 73.

The protein belongs to the high-potential iron-sulfur protein (HiPIP) family. As to quaternary structure, homodimer.

Functionally, specific class of high-redox-potential 4Fe-4S ferredoxins. Functions in anaerobic electron transport in most purple and in some other photosynthetic bacteria and in at least one genus (Paracoccus) of halophilic, denitrifying bacteria. This is High-potential iron-sulfur protein (hip) from Thiococcus pfennigii (Thiocapsa pfennigii).